The following is a 71-amino-acid chain: Phosphatidylinositol N-acetylglucosaminyltransferase ERI1 subunit (71 aa).

Helical transmembrane passes span 5 to 25 (VAATLVLVVTYSIVGASLWCL) and 35 to 55 (LYYWCIVQLLPVMLWVWCVIS).

In terms of assembly, interacts with GPI2, suggesting that it is a component of the GPI-GnT complex, probably composed of GPI1, GPI2, GPI3, GPI15, and ERI1.

The protein resides in the endoplasmic reticulum membrane. It functions in the pathway glycolipid biosynthesis; glycosylphosphatidylinositol-anchor biosynthesis. Its function is as follows. Probable component of the GPI-GlcNAc transferase (GPI-GnT) complex in the endoplasmic reticulum, a complex that catalyzes transfer of GlcNAc from UDP-GlcNAc to an acceptor phosphatidylinositol, the first step in the production of GPI-anchors for cell surface proteins. This Eremothecium gossypii (strain ATCC 10895 / CBS 109.51 / FGSC 9923 / NRRL Y-1056) (Yeast) protein is Phosphatidylinositol N-acetylglucosaminyltransferase ERI1 subunit (ERI1).